The following is a 134-amino-acid chain: DNA-directed RNA polymerase subunit omega (134 aa).

The protein belongs to the RNA polymerase subunit omega family. In terms of assembly, the RNAP catalytic core consists of 2 alpha, 1 beta, 1 beta' and 1 omega subunit. When a sigma factor is associated with the core the holoenzyme is formed, which can initiate transcription.

The enzyme catalyses RNA(n) + a ribonucleoside 5'-triphosphate = RNA(n+1) + diphosphate. Promotes RNA polymerase assembly. Latches the N- and C-terminal regions of the beta' subunit thereby facilitating its interaction with the beta and alpha subunits. This Rhizobium johnstonii (strain DSM 114642 / LMG 32736 / 3841) (Rhizobium leguminosarum bv. viciae) protein is DNA-directed RNA polymerase subunit omega.